Consider the following 91-residue polypeptide: Gas vesicle protein K (91 aa).

It belongs to the gas vesicle GvpK family.

It localises to the gas vesicle. Might be involved in nucleating gas vesicle formation. Gas vesicles are hollow, gas filled proteinaceous nanostructures found in some microorganisms. It is not clear what function gas vesicles perform in soil bacteria. The chain is Gas vesicle protein K from Streptomyces sp. (strain CB03234).